We begin with the raw amino-acid sequence, 692 residues long: Single-strand DNA endonuclease ASTE1 (692 aa).

The protein belongs to the asteroid family.

Functionally, structure-specific DNA endonuclease that specifically cleaves single-stranded DNA and 3' overhang DNA. The protein is Single-strand DNA endonuclease ASTE1 (aste1a) of Danio rerio (Zebrafish).